A 356-amino-acid polypeptide reads, in one-letter code: Protein ATP1B4 (356 aa).

At Met1 to Ser109 the chain is on the nuclear side. The disordered stretch occupies residues Leu32 to Thr77. 2 stretches are compositionally biased toward acidic residues: residues Ala33–Ala43 and Leu51–Gly72. Residues Leu110–Ile130 traverse the membrane as a helical; Signal-anchor for type II membrane protein segment. Topologically, residues Tyr131 to Thr356 are perinuclear space.

The protein belongs to the X(+)/potassium ATPases subunit beta family. In terms of assembly, does not associate with known Na,K-ATPase alpha-subunits. Associates with a SMAD7-transcriptional complex. Interacts with SNW1 and TOR1AIP1. In terms of tissue distribution, expressed in perinatal myocytes (at protein level). Expressed during postnatal development in skeletal muscle and heart.

Its subcellular location is the nucleus inner membrane. In terms of biological role, may act as a transcriptional coregulator during muscle development through its interaction with SNW1. Has lost its ancestral function as a Na,K-ATPase beta-subunit. In Rattus norvegicus (Rat), this protein is Protein ATP1B4 (Atp1b4).